Here is a 300-residue protein sequence, read N- to C-terminus: Lysenin-related protein 2 (300 aa).

Residues 12–35 (EQIEVDVVAVWKEGYVYENRGSTS) form an N-terminal cap domain region. A beta-hairpin domain region spans residues 36–109 (VEQKIKITKG…SKEIEHTITI (74 aa)). The N-terminal cap domain stretch occupies residues 110-158 (PPTSKFTRWQLNADVGGADIEYMYLIDEVTPIGGTLSIPQVIKSRAKIL). The C-terminal receptor-binding domain stretch occupies residues 159–299 (VGREIYLGET…EDKWILEVVK (141 aa)). An N-(acyl)-sphingosylphosphocholine contacts are provided by Lys-187, Ser-229, Tyr-235, and Tyr-284. Cysteines 274 and 285 form a disulfide.

It belongs to the lysenin family. Binds to sphingomyelin as a monomer by using its C-terminal domain. Forms a nonamer when sphingomyelin/LRP-2 ratio is lower than ca 500. Oligomerization, but not binding, is influenced by the fluidity of sphingomyelin. Expressed by coelomocytes.

The protein localises to the secreted. Its subcellular location is the target cell membrane. Its function is as follows. Pore-forming toxin that specifically binds sphingomyelin in the plasma membrane of various cells. Has hemolytic activity. It also has antibacterial activities against B.megaterium. The sequence is that of Lysenin-related protein 2 from Eisenia fetida (Red wiggler worm).